Consider the following 361-residue polypeptide: uncharacterized protein (361 aa).

The signal sequence occupies residues 1–17 (MNLFIYVLLLSIWTSSC). Over 18–47 (LDRNESNGSATAVTTHAEFKQTKLQELRRR) the chain is Extracellular. A glycan (N-linked (GlcNAc...) asparagine) is linked at asparagine 24. A helical membrane pass occupies residues 48 to 68 (LLIIVIGTLITGYMVSCTCLL). At 69–361 (HYSCDSEEAH…EDIYKNSRNN (293 aa)) the chain is on the cytoplasmic side. The segment covering 95 to 106 (SSKISFTDSKSP) has biased composition (polar residues). A disordered region spans residues 95–197 (SSKISFTDSK…SQVSPSYPEK (103 aa)). Low complexity predominate over residues 144–158 (PSSQKKPSKPSAPKK). Positions 169–185 (HRTRSPKKAHRQAHAHK) are enriched in basic residues.

The protein localises to the membrane. This is an uncharacterized protein from Bos taurus (Bovine).